Consider the following 91-residue polypeptide: Sec-independent protein translocase protein TatA (91 aa).

Residues 1-21 traverse the membrane as a helical segment; that stretch reads MGIFDWKHWIVILIVVVLVFG. The interval 42–91 is disordered; sequence AMHDDDKPAEQPAPQPQQAQPAPQGSPLNQPHTIDAQAHKVDEPIRKDQV. Low complexity predominate over residues 51–64; that stretch reads EQPAPQPQQAQPAP. Basic and acidic residues predominate over residues 78-91; that stretch reads QAHKVDEPIRKDQV.

This sequence belongs to the TatA/E family. The Tat system comprises two distinct complexes: a TatABC complex, containing multiple copies of TatA, TatB and TatC subunits, and a separate TatA complex, containing only TatA subunits. Substrates initially bind to the TatABC complex, which probably triggers association of the separate TatA complex to form the active translocon.

The protein resides in the cell inner membrane. Functionally, part of the twin-arginine translocation (Tat) system that transports large folded proteins containing a characteristic twin-arginine motif in their signal peptide across membranes. TatA could form the protein-conducting channel of the Tat system. In Pseudomonas syringae pv. tomato (strain ATCC BAA-871 / DC3000), this protein is Sec-independent protein translocase protein TatA.